Reading from the N-terminus, the 427-residue chain is Inward rectifier potassium channel 2 (427 aa).

At 1–81 (MGSVRTNRYS…IFTTCVDIRW (81 aa)) the chain is on the cytoplasmic side. The chain crosses the membrane as a helical span at residues 82–106 (RWMLVIFCLTFILSWLFFGCVFWLI). Residues 107-128 (ALLHGDLENQENNKPCVSQVSS) lie on the Extracellular side of the membrane. The helical; Pore-forming intramembrane region spans 129–140 (FTAAFLFSIETQ). An intramembrane region (pore-forming) is located at residues 141–147 (TTIGYGF). A Selectivity filter motif is present at residues 142 to 147 (TIGYGF). The Extracellular segment spans residues 148 to 156 (RCVTDECPI). Residues 157–178 (AVFMVVFQSIVGCIIDAFIIGA) form a helical membrane-spanning segment. Residues 179–427 (VMAKMAKPKK…PRPLRRESEI (249 aa)) lie on the Cytoplasmic side of the membrane. The interval 181-208 (AKMAKPKKRNETLVFSHNAVVAMRDGKL) is polyphosphoinositide (PIP2)-binding. The segment at 386-427 (EEDEIDTGVPESTSTDTHPDMDHHNQAGVPLEPRPLRRESEI) is disordered. The PDZ-binding motif lies at 425–427 (SEI).

This sequence belongs to the inward rectifier-type potassium channel (TC 1.A.2.1) family. KCNJ2 subfamily. As to quaternary structure, homotetramer. Homomultimeric and heteromultimeric association with KCNJ4/Kir2.3, resulting in an enhanced G-protein-induced current. Associates, via its PDZ-recognition domain, with a complex containing LIN7A, LIN7B, LIN7C, DLG1, CASK and APBA1. In terms of tissue distribution, found in the apical basilar papilla of the inner ear, brain, muscle, cerebellum, heart and liver.

The protein localises to the cell membrane. Its subcellular location is the sarcolemma. It localises to the T-tubule. The enzyme catalyses K(+)(in) = K(+)(out). With respect to regulation, activated by phosphatidylinositol 4,5 biphosphate (PtdIns(4,5)P2). Its function is as follows. Inward rectifier potassium channels are characterized by a greater tendency to allow potassium to flow into the cell rather than out of it. Their voltage dependence is regulated by the concentration of extracellular potassium; as external potassium is raised, the voltage range of the channel opening shifts to more positive voltages. The inward rectification is mainly due to the blockage of outward current by internal magnesium. Can be blocked by external barium. Probably participates in establishing action potential waveform and excitability of neuronal and muscle tissues. The sequence is that of Inward rectifier potassium channel 2 (KCNJ2) from Gallus gallus (Chicken).